The following is a 292-amino-acid chain: Probable alpha-L-glutamate ligase (292 aa).

The ATP-grasp domain occupies 104-287 (HQLLAAKGID…VATRIIEHVE (184 aa)). ATP contacts are provided by residues lysine 141, 178-179 (EF), aspartate 187, and 211-213 (RSN). Residues aspartate 248, glutamate 260, and asparagine 262 each coordinate Mg(2+). Mn(2+) contacts are provided by aspartate 248, glutamate 260, and asparagine 262.

This sequence belongs to the RimK family. It depends on Mg(2+) as a cofactor. Mn(2+) serves as cofactor.

The chain is Probable alpha-L-glutamate ligase from Stenotrophomonas maltophilia (strain K279a).